We begin with the raw amino-acid sequence, 117 residues long: MNYDFSRELRLLTPEDYKFVFKQAHRAGSPHFTILARENSLSHPRLGLAVPKKQIKTAVGRNKFKRIVRESFRNKQHSLPAKDFVVIAKKSAQELSNEDFNKLLDKLWHRLSRPSRG.

It belongs to the RnpA family. Consists of a catalytic RNA component (M1 or rnpB) and a protein subunit.

It carries out the reaction Endonucleolytic cleavage of RNA, removing 5'-extranucleotides from tRNA precursor.. In terms of biological role, RNaseP catalyzes the removal of the 5'-leader sequence from pre-tRNA to produce the mature 5'-terminus. It can also cleave other RNA substrates such as 4.5S RNA. The protein component plays an auxiliary but essential role in vivo by binding to the 5'-leader sequence and broadening the substrate specificity of the ribozyme. The polypeptide is Ribonuclease P protein component (Aliivibrio fischeri (strain ATCC 700601 / ES114) (Vibrio fischeri)).